A 247-amino-acid chain; its full sequence is DNA polymerase sliding clamp (247 aa).

This sequence belongs to the PCNA family. As to quaternary structure, homotrimer. The subunits circularize to form a toroid; DNA passes through its center. Replication factor C (RFC) is required to load the toroid on the DNA.

Its function is as follows. Sliding clamp subunit that acts as a moving platform for DNA processing. Responsible for tethering the catalytic subunit of DNA polymerase and other proteins to DNA during high-speed replication. This is DNA polymerase sliding clamp from Methanosphaerula palustris (strain ATCC BAA-1556 / DSM 19958 / E1-9c).